Reading from the N-terminus, the 345-residue chain is Anthranilate phosphoribosyltransferase (345 aa).

5-phospho-alpha-D-ribose 1-diphosphate is bound by residues Gly-80, 83 to 84 (GD), Thr-88, 90 to 93 (NIST), 108 to 116 (KHGNRSVSS), and Ser-120. Gly-80 is a binding site for anthranilate. Ser-92 lines the Mg(2+) pocket. An anthranilate-binding site is contributed by Asn-111. Arg-166 lines the anthranilate pocket. Mg(2+) is bound by residues Asp-225 and Glu-226.

This sequence belongs to the anthranilate phosphoribosyltransferase family. Homodimer. Mg(2+) is required as a cofactor.

The catalysed reaction is N-(5-phospho-beta-D-ribosyl)anthranilate + diphosphate = 5-phospho-alpha-D-ribose 1-diphosphate + anthranilate. It functions in the pathway amino-acid biosynthesis; L-tryptophan biosynthesis; L-tryptophan from chorismate: step 2/5. Functionally, catalyzes the transfer of the phosphoribosyl group of 5-phosphorylribose-1-pyrophosphate (PRPP) to anthranilate to yield N-(5'-phosphoribosyl)-anthranilate (PRA). The protein is Anthranilate phosphoribosyltransferase of Pelotomaculum thermopropionicum (strain DSM 13744 / JCM 10971 / SI).